Here is a 247-residue protein sequence, read N- to C-terminus: Neurotrophic factor BDNF precursor form (247 aa).

The first 18 residues, 1 to 18, serve as a signal peptide directing secretion; the sequence is MTILFLTMVISYFGCMKA. Positions 19–128 are excised as a propeptide; sequence APMKEANARG…AANMSMRVRR (110 aa). N-linked (GlcNAc...) asparagine glycosylation is present at N121. Cystine bridges form between C141-C208, C186-C237, and C196-C239.

This sequence belongs to the NGF-beta family. As to quaternary structure, monomers and homodimers. Binds to NTRK2/TRKB. Can form heterodimers with other neurotrophin family members, such as NTF3 and NTF4 (in vitro), but the physiological relevance of this is not clear. BDNF precursor form: interacts with the heterodimer formed by NGFR and SORCS2. Mature BDNF has much lower affinity for the heterodimer formed by NGFR and SORCS2. Post-translationally, N-glycosylated and glycosulfated, contrary to mature BDNF. In terms of processing, mature BDNF is produced by proteolytic removal of the propeptide, catalyzed by a FURIN family member. In addition, the precursor form is proteolytically cleaved within the propeptide, but this is not an obligatory intermediate for the production of mature BDNF. Can be converted into mature BDNF by plasmin (PLG).

The protein localises to the secreted. Functionally, important signaling molecule that activates signaling cascades downstream of NTRK2. During development, promotes the survival and differentiation of selected neuronal populations of the peripheral and central nervous systems. Participates in axonal growth, pathfinding and in the modulation of dendritic growth and morphology. Major regulator of synaptic transmission and plasticity at adult synapses in many regions of the CNS. The versatility of BDNF is emphasized by its contribution to a range of adaptive neuronal responses including long-term potentiation (LTP), long-term depression (LTD), certain forms of short-term synaptic plasticity, as well as homeostatic regulation of intrinsic neuronal excitability. In terms of biological role, important signaling molecule that activates signaling cascades downstream of NTRK2. Activates signaling cascades via the heterodimeric receptor formed by NGFR and SORCS2. Signaling via NGFR and SORCS2 plays a role in synaptic plasticity and long-term depression (LTD). Binding to NGFR and SORCS2 promotes neuronal apoptosis. Promotes neuronal growth cone collapse. The polypeptide is Neurotrophic factor BDNF precursor form (BDNF) (Equus caballus (Horse)).